Consider the following 163-residue polypeptide: Crossover junction endodeoxyribonuclease RuvC (163 aa).

Active-site residues include D4, E65, and D138. The Mg(2+) site is built by D4, E65, and D138.

The protein belongs to the RuvC family. As to quaternary structure, homodimer which binds Holliday junction (HJ) DNA. The HJ becomes 2-fold symmetrical on binding to RuvC with unstacked arms; it has a different conformation from HJ DNA in complex with RuvA. In the full resolvosome a probable DNA-RuvA(4)-RuvB(12)-RuvC(2) complex forms which resolves the HJ. Requires Mg(2+) as cofactor.

Its subcellular location is the cytoplasm. It carries out the reaction Endonucleolytic cleavage at a junction such as a reciprocal single-stranded crossover between two homologous DNA duplexes (Holliday junction).. In terms of biological role, the RuvA-RuvB-RuvC complex processes Holliday junction (HJ) DNA during genetic recombination and DNA repair. Endonuclease that resolves HJ intermediates. Cleaves cruciform DNA by making single-stranded nicks across the HJ at symmetrical positions within the homologous arms, yielding a 5'-phosphate and a 3'-hydroxyl group; requires a central core of homology in the junction. The consensus cleavage sequence is 5'-(A/T)TT(C/G)-3'. Cleavage occurs on the 3'-side of the TT dinucleotide at the point of strand exchange. HJ branch migration catalyzed by RuvA-RuvB allows RuvC to scan DNA until it finds its consensus sequence, where it cleaves and resolves the cruciform DNA. This is Crossover junction endodeoxyribonuclease RuvC from Corynebacterium diphtheriae (strain ATCC 700971 / NCTC 13129 / Biotype gravis).